The chain runs to 197 residues: MENHEPDGTIIKENLTDIIARKINQLPEAERNLLENGSTYVGLNAALCGLIANSLFRRILHVTQARIAAGLPMAVIPFLTANVSYKGFVSLPLNTGDLQCETCTVTRGGLVGLVFGGLYPVFLAIPVNGGLAARYNSALLPEKGNILNYWIRISKPVFRKMLFPILLQTGFAAYLGSRQYKLLIKALQLPEPGLEIE.

The Mitochondrial matrix portion of the chain corresponds to 1-35; sequence MENHEPDGTIIKENLTDIIARKINQLPEAERNLLE. The chain crosses the membrane as a helical span at residues 36–56; the sequence is NGSTYVGLNAALCGLIANSLF. Over 57–58 the chain is Mitochondrial intermembrane; it reads RR. Residues 59-79 traverse the membrane as a helical segment; that stretch reads ILHVTQARIAAGLPMAVIPFL. The Mitochondrial matrix portion of the chain corresponds to 80-107; that stretch reads TANVSYKGFVSLPLNTGDLQCETCTVTR. Residues 108-128 form a helical membrane-spanning segment; sequence GGLVGLVFGGLYPVFLAIPVN. Residues 129–160 are Mitochondrial intermembrane-facing; it reads GGLAARYNSALLPEKGNILNYWIRISKPVFRK. The chain crosses the membrane as a helical span at residues 161 to 177; it reads MLFPILLQTGFAAYLGS. Topologically, residues 178–197 are mitochondrial matrix; the sequence is RQYKLLIKALQLPEPGLEIE.

This sequence belongs to the TMEM126 family. Interacts with OXA1L; promoting cotranslational quality control in mitochondria.

Its subcellular location is the mitochondrion inner membrane. Its function is as follows. Protein required for the cotranslational protein quality control in the inner membrane of the mitochondria. Associates with newly synthesized polypeptides and may act as a chaperone that cooperates with OXA1L for the insertion of newly synthesized mitochondrial proteins into the inner membrane. Required for the assembly of the ND4 module of mitochondrial complex I. This is Transmembrane protein 126A (TMEM126A) from Bos taurus (Bovine).